A 273-amino-acid chain; its full sequence is Putative pyruvate, phosphate dikinase regulatory protein (273 aa).

An ADP-binding site is contributed by 149-156; that stretch reads GPSRTSKT.

Belongs to the pyruvate, phosphate/water dikinase regulatory protein family. PDRP subfamily.

The enzyme catalyses N(tele)-phospho-L-histidyl/L-threonyl-[pyruvate, phosphate dikinase] + ADP = N(tele)-phospho-L-histidyl/O-phospho-L-threonyl-[pyruvate, phosphate dikinase] + AMP + H(+). The catalysed reaction is N(tele)-phospho-L-histidyl/O-phospho-L-threonyl-[pyruvate, phosphate dikinase] + phosphate + H(+) = N(tele)-phospho-L-histidyl/L-threonyl-[pyruvate, phosphate dikinase] + diphosphate. Functionally, bifunctional serine/threonine kinase and phosphorylase involved in the regulation of the pyruvate, phosphate dikinase (PPDK) by catalyzing its phosphorylation/dephosphorylation. This Rickettsia bellii (strain OSU 85-389) protein is Putative pyruvate, phosphate dikinase regulatory protein.